The chain runs to 476 residues: Dihydrolipoyl dehydrogenase (476 aa).

FAD contacts are provided by residues 36–45, Lys-54, and Ala-117; that span reads EHQERLGGVC. Cys-45 and Cys-50 form a disulfide bridge. NAD(+) is bound by residues 182–186, Asp-205, Val-238, and 271–274; these read GGGII and AIGR. Positions 314 and 322 each coordinate FAD. Catalysis depends on His-446, which acts as the Proton acceptor.

This sequence belongs to the class-I pyridine nucleotide-disulfide oxidoreductase family. Homodimer. FAD is required as a cofactor.

It localises to the cytoplasm. It catalyses the reaction N(6)-[(R)-dihydrolipoyl]-L-lysyl-[protein] + NAD(+) = N(6)-[(R)-lipoyl]-L-lysyl-[protein] + NADH + H(+). Functionally, lipoamide dehydrogenase is a component of the alpha-ketoacid dehydrogenase complexes. In Buchnera aphidicola subsp. Schizaphis graminum (strain Sg), this protein is Dihydrolipoyl dehydrogenase (lpdA).